A 218-amino-acid polypeptide reads, in one-letter code: Uracil-DNA glycosylase (218 aa).

Residue Asp-60 is the Proton acceptor of the active site.

This sequence belongs to the uracil-DNA glycosylase (UDG) superfamily. UNG family.

The protein resides in the cytoplasm. It carries out the reaction Hydrolyzes single-stranded DNA or mismatched double-stranded DNA and polynucleotides, releasing free uracil.. Its function is as follows. Excises uracil residues from the DNA which can arise as a result of misincorporation of dUMP residues by DNA polymerase or due to deamination of cytosine. This chain is Uracil-DNA glycosylase, found in Shewanella oneidensis (strain ATCC 700550 / JCM 31522 / CIP 106686 / LMG 19005 / NCIMB 14063 / MR-1).